The sequence spans 241 residues: Triosephosphate isomerase (241 aa).

A substrate-binding site is contributed by 9–11 (NWK). The Electrophile role is filled by histidine 88. Residue glutamate 158 is the Proton acceptor of the active site. Residues glycine 164, serine 203, and 224 to 225 (GG) contribute to the substrate site.

The protein belongs to the triosephosphate isomerase family. Homodimer.

It is found in the cytoplasm. The catalysed reaction is D-glyceraldehyde 3-phosphate = dihydroxyacetone phosphate. The protein operates within carbohydrate biosynthesis; gluconeogenesis. It functions in the pathway carbohydrate degradation; glycolysis; D-glyceraldehyde 3-phosphate from glycerone phosphate: step 1/1. Involved in the gluconeogenesis. Catalyzes stereospecifically the conversion of dihydroxyacetone phosphate (DHAP) to D-glyceraldehyde-3-phosphate (G3P). In Dichelobacter nodosus (strain VCS1703A), this protein is Triosephosphate isomerase.